A 118-amino-acid polypeptide reads, in one-letter code: Small ribosomal subunit protein uS13 (118 aa).

The disordered stretch occupies residues 94-118; the sequence is SLPLRGQRTKTNARTRKGPRKPIKK.

The protein belongs to the universal ribosomal protein uS13 family. Part of the 30S ribosomal subunit. Forms a loose heterodimer with protein S19. Forms two bridges to the 50S subunit in the 70S ribosome.

Located at the top of the head of the 30S subunit, it contacts several helices of the 16S rRNA. In the 70S ribosome it contacts the 23S rRNA (bridge B1a) and protein L5 of the 50S subunit (bridge B1b), connecting the 2 subunits; these bridges are implicated in subunit movement. Contacts the tRNAs in the A and P-sites. The protein is Small ribosomal subunit protein uS13 of Idiomarina loihiensis (strain ATCC BAA-735 / DSM 15497 / L2-TR).